A 291-amino-acid chain; its full sequence is Porphobilinogen deaminase (291 aa).

Cys237 carries the S-(dipyrrolylmethanemethyl)cysteine modification.

The protein belongs to the HMBS family. In terms of assembly, monomer. Dipyrromethane serves as cofactor.

The catalysed reaction is 4 porphobilinogen + H2O = hydroxymethylbilane + 4 NH4(+). Its pathway is porphyrin-containing compound metabolism; protoporphyrin-IX biosynthesis; coproporphyrinogen-III from 5-aminolevulinate: step 2/4. Its function is as follows. Tetrapolymerization of the monopyrrole PBG into the hydroxymethylbilane pre-uroporphyrinogen in several discrete steps. The polypeptide is Porphobilinogen deaminase (Clostridium perfringens (strain ATCC 13124 / DSM 756 / JCM 1290 / NCIMB 6125 / NCTC 8237 / Type A)).